Reading from the N-terminus, the 424-residue chain is Histidine--tRNA ligase (424 aa).

This sequence belongs to the class-II aminoacyl-tRNA synthetase family. In terms of assembly, homodimer.

Its subcellular location is the cytoplasm. It catalyses the reaction tRNA(His) + L-histidine + ATP = L-histidyl-tRNA(His) + AMP + diphosphate + H(+). The protein is Histidine--tRNA ligase of Shewanella woodyi (strain ATCC 51908 / MS32).